Reading from the N-terminus, the 459-residue chain is MNQGKIVQCIGAVVDVEFAREEMPKVYDALVLEGSELTLEVQQQLGDGVVRTIALGSSEGLRRGMMVTNTGDQIRVPVGTKTLGRIMDVLGTPIDEMGPIGAEQNRSIHQKAPAFDELSASTELLETGIKVIDLVCPFAKGGKVGLFGGAGVGKTVNMMELIRNIAIEHSGYSVFAGVGERTREGNDFYHEMKDSNVLDKVALVYGQMNEPPGNRLRVALTGLTMAEHFRDEGRDVLLFVDNIYRFTLAGTEVSALLGRMPSAVGYQPTLAEEMGRLQERITSTKSGSITSIQAVYVPADDLTDPSPATTFGHLDATVVLSRDIASLGIYPAVDPLDSTSRQLDPLVVGEEHYSTARAVQQTLQRYKELRDIIAILGMDELSPEDKLAVARARKIQRFLSQPFNVAEVFTGAPGKYVPLKETIKGFKGIVSGEYDHLPEQAFYMVGGIDEAVEKAKTLQ.

Gly148 to Thr155 lines the ATP pocket.

This sequence belongs to the ATPase alpha/beta chains family. F-type ATPases have 2 components, CF(1) - the catalytic core - and CF(0) - the membrane proton channel. CF(1) has five subunits: alpha(3), beta(3), gamma(1), delta(1), epsilon(1). CF(0) has three main subunits: a(1), b(2) and c(9-12). The alpha and beta chains form an alternating ring which encloses part of the gamma chain. CF(1) is attached to CF(0) by a central stalk formed by the gamma and epsilon chains, while a peripheral stalk is formed by the delta and b chains.

It is found in the cell inner membrane. The enzyme catalyses ATP + H2O + 4 H(+)(in) = ADP + phosphate + 5 H(+)(out). In terms of biological role, produces ATP from ADP in the presence of a proton gradient across the membrane. The catalytic sites are hosted primarily by the beta subunits. This Nitrosospira multiformis (strain ATCC 25196 / NCIMB 11849 / C 71) protein is ATP synthase subunit beta 1.